The chain runs to 98 residues: uncharacterized protein (98 aa).

Belongs to the HesB/IscA family.

This is an uncharacterized protein from Staphylococcus aureus (strain USA300).